The following is a 137-amino-acid chain: Small ribosomal subunit protein bS6 (137 aa).

It belongs to the bacterial ribosomal protein bS6 family.

Binds together with bS18 to 16S ribosomal RNA. The chain is Small ribosomal subunit protein bS6 from Sulfurimonas denitrificans (strain ATCC 33889 / DSM 1251) (Thiomicrospira denitrificans (strain ATCC 33889 / DSM 1251)).